The primary structure comprises 613 residues: Autophagy-related protein 22-2 (613 aa).

A disordered region spans residues 1-28; it reads MVLNSTPPASPGAEAQQRPPRYPGEDTA. A helical membrane pass occupies residues 41–61; sequence YGIAAEVFAVCGVGSFLPLTL. Positions 80–96 are enriched in polar residues; sequence GSSSPSTAPGNGTTTAT. The tract at residues 80-99 is disordered; that stretch reads GSSSPSTAPGNGTTTATLRR. Residue asparagine 90 is glycosylated (N-linked (GlcNAc...) asparagine). 3 helical membrane-spanning segments follow: residues 120–140, 155–177, and 189–209; these read SFAMYTFSLAVLVQALTLISF, LAFGFIGSMTSMLFIFIAPPVYI, and CLGSSFVVLNSFLPVLVANDP. The segment at 216–257 is disordered; that stretch reads KEEGEELSPVNSSGEFARSEDLDEENVRDSDDHFTTGHGLKT. Residue asparagine 226 is glycosylated (N-linked (GlcNAc...) asparagine). The span at 232–250 shows a compositional bias: basic and acidic residues; it reads ARSEDLDEENVRDSDDHFT. 4 helical membrane-spanning segments follow: residues 278-298, 307-327, 382-402, and 418-438; these read VGLGYCAAVLVQILSILMLFA, ISGTLPMRFVLLLVGIWWFSF, VIVFLIAWFLLSDAMATVSGT, and VGLLSITATLSGMAGAFLWPV. N-linked (GlcNAc...) asparagine glycosylation is present at asparagine 448. Helical transmembrane passes span 453–473, 488–510, 522–544, and 553–573; these read LCIALFEVIPLYGMLAYIPLF, FPLGIVHGLVSGGLSSYCRSFFG, YALYAATDKGSSFIGPAIVGMLI, and GFFFIAVLILLPIPLIWMVNA. Residues 592–613 are disordered; that stretch reads GEHASEYGGPSEEAEGLLARDI.

It belongs to the ATG22 family.

The protein resides in the vacuole membrane. Vacuolar effluxer which mediate the efflux of amino acids resulting from autophagic degradation. The release of autophagic amino acids allows the maintenance of protein synthesis and viability during nitrogen starvation. The chain is Autophagy-related protein 22-2 (atg22-2) from Neosartorya fischeri (strain ATCC 1020 / DSM 3700 / CBS 544.65 / FGSC A1164 / JCM 1740 / NRRL 181 / WB 181) (Aspergillus fischerianus).